We begin with the raw amino-acid sequence, 202 residues long: MKVAVVAVQGAVEEHESILEAAGERIGEDVEVVWARYPEDLEDVDAVVIPGGESTTIGRLMERHDLVKPLLELAESDTPILGTCAGMVILAREVVPQAHPGTEVEIEQPLLGLMDVRVVRNAFGRQRESFEVDIEIEGLEDRFRAVFIRAPAVDEVLSDDVKVLAEYGDYIVAVEQDHLLATAFHPELTDDPRLHAYFLEKV.

52-54 contacts L-glutamine; the sequence is GES. Cys-84 (nucleophile) is an active-site residue. L-glutamine-binding positions include Arg-120 and 148-149; that span reads IR. Catalysis depends on charge relay system residues His-185 and Glu-187.

Belongs to the glutaminase PdxT/SNO family. In the presence of PdxS, forms a dodecamer of heterodimers. Only shows activity in the heterodimer.

It carries out the reaction aldehydo-D-ribose 5-phosphate + D-glyceraldehyde 3-phosphate + L-glutamine = pyridoxal 5'-phosphate + L-glutamate + phosphate + 3 H2O + H(+). The catalysed reaction is L-glutamine + H2O = L-glutamate + NH4(+). It functions in the pathway cofactor biosynthesis; pyridoxal 5'-phosphate biosynthesis. Functionally, catalyzes the hydrolysis of glutamine to glutamate and ammonia as part of the biosynthesis of pyridoxal 5'-phosphate. The resulting ammonia molecule is channeled to the active site of PdxS. In Methanopyrus kandleri (strain AV19 / DSM 6324 / JCM 9639 / NBRC 100938), this protein is Pyridoxal 5'-phosphate synthase subunit PdxT.